A 445-amino-acid polypeptide reads, in one-letter code: tRNA-2-methylthio-N(6)-dimethylallyladenosine synthase (445 aa).

The 118-residue stretch at 4–121 (NKIYIKTWGC…LPNMIQEVKK (118 aa)) folds into the MTTase N-terminal domain. Cys-13, Cys-50, Cys-84, Cys-158, Cys-162, and Cys-165 together coordinate [4Fe-4S] cluster. A Radical SAM core domain is found at 144 to 376 (RKPKVTAFVS…QTLIRNNTTM (233 aa)). A TRAM domain is found at 379-442 (QKMLGSIQSV…PNSLRGSYEK (64 aa)).

The protein belongs to the methylthiotransferase family. MiaB subfamily. In terms of assembly, monomer. [4Fe-4S] cluster is required as a cofactor.

It is found in the cytoplasm. The catalysed reaction is N(6)-dimethylallyladenosine(37) in tRNA + (sulfur carrier)-SH + AH2 + 2 S-adenosyl-L-methionine = 2-methylsulfanyl-N(6)-dimethylallyladenosine(37) in tRNA + (sulfur carrier)-H + 5'-deoxyadenosine + L-methionine + A + S-adenosyl-L-homocysteine + 2 H(+). Its function is as follows. Catalyzes the methylthiolation of N6-(dimethylallyl)adenosine (i(6)A), leading to the formation of 2-methylthio-N6-(dimethylallyl)adenosine (ms(2)i(6)A) at position 37 in tRNAs that read codons beginning with uridine. The protein is tRNA-2-methylthio-N(6)-dimethylallyladenosine synthase of Buchnera aphidicola subsp. Baizongia pistaciae (strain Bp).